The following is a 152-amino-acid chain: MDEQEIQRLVEEVSLQYFGMPFLHKALFNSRLRTTGGRYLLNTHNIELNYRYYEMYGKEELVGIVKHELCHYHLHITGRGYKHRDKDFRELLKAVDAPRFCKRMMNEEKEKKVYMYECMGCSLQYVRRRQINTKRYVCGKCKGKLILIKKTS.

Positions Q7–I148 constitute a SprT-like domain. H67 is a binding site for Zn(2+). E68 is an active-site residue. Zn(2+) is bound at residue H71.

The protein belongs to the SprT family. Zn(2+) is required as a cofactor.

The protein resides in the cytoplasm. The sequence is that of Protein SprT-like from Bacillus cereus (strain ATCC 10987 / NRS 248).